A 146-amino-acid chain; its full sequence is D-aminoacyl-tRNA deacylase (146 aa).

The Gly-cisPro motif, important for rejection of L-amino acids signature appears at 137-138; the sequence is GP.

Belongs to the DTD family. Homodimer.

Its subcellular location is the cytoplasm. It catalyses the reaction glycyl-tRNA(Ala) + H2O = tRNA(Ala) + glycine + H(+). It carries out the reaction a D-aminoacyl-tRNA + H2O = a tRNA + a D-alpha-amino acid + H(+). In terms of biological role, an aminoacyl-tRNA editing enzyme that deacylates mischarged D-aminoacyl-tRNAs. Also deacylates mischarged glycyl-tRNA(Ala), protecting cells against glycine mischarging by AlaRS. Acts via tRNA-based rather than protein-based catalysis; rejects L-amino acids rather than detecting D-amino acids in the active site. By recycling D-aminoacyl-tRNA to D-amino acids and free tRNA molecules, this enzyme counteracts the toxicity associated with the formation of D-aminoacyl-tRNA entities in vivo and helps enforce protein L-homochirality. This is D-aminoacyl-tRNA deacylase from Bacillus cereus (strain B4264).